Reading from the N-terminus, the 341-residue chain is Biotin synthase (341 aa).

The Radical SAM core domain maps to 39–263; it reads EQVQLCTLLS…VAVARITMPL (225 aa). Residues cysteine 54, cysteine 58, and cysteine 61 each coordinate [4Fe-4S] cluster. The [2Fe-2S] cluster site is built by cysteine 98, cysteine 129, cysteine 189, and arginine 267.

The protein belongs to the radical SAM superfamily. Biotin synthase family. As to quaternary structure, homodimer. It depends on [4Fe-4S] cluster as a cofactor. Requires [2Fe-2S] cluster as cofactor.

It catalyses the reaction (4R,5S)-dethiobiotin + (sulfur carrier)-SH + 2 reduced [2Fe-2S]-[ferredoxin] + 2 S-adenosyl-L-methionine = (sulfur carrier)-H + biotin + 2 5'-deoxyadenosine + 2 L-methionine + 2 oxidized [2Fe-2S]-[ferredoxin]. It functions in the pathway cofactor biosynthesis; biotin biosynthesis; biotin from 7,8-diaminononanoate: step 2/2. Functionally, catalyzes the conversion of dethiobiotin (DTB) to biotin by the insertion of a sulfur atom into dethiobiotin via a radical-based mechanism. This is Biotin synthase from Erythrobacter litoralis (strain HTCC2594).